Reading from the N-terminus, the 632-residue chain is Putative acetyl-CoA decarbonylase/synthase complex subunit alpha-like (632 aa).

[Ni-4Fe-4S] cluster is bound by residues histidine 200, histidine 226, cysteine 263, cysteine 379, cysteine 408, and cysteine 438.

It belongs to the Ni-containing carbon monoxide dehydrogenase family.

Its function is as follows. Part of the ACDS complex that catalyzes the reversible cleavage of acetyl-CoA, allowing autotrophic growth from CO(2). The alpha-epsilon subcomponent functions as a carbon monoxide dehydrogenase. The sequence is that of Putative acetyl-CoA decarbonylase/synthase complex subunit alpha-like (cdhA2) from Methanopyrus kandleri (strain AV19 / DSM 6324 / JCM 9639 / NBRC 100938).